The primary structure comprises 177 residues: Protein GrpE (177 aa).

This sequence belongs to the GrpE family. In terms of assembly, homodimer. The cofactor is K(+).

It is found in the cytoplasm. Its function is as follows. Participates actively in the response to hyperosmotic and heat shock by preventing the aggregation of stress-denatured proteins, in association with DnaK and GrpE. It is the nucleotide exchange factor for DnaK and may function as a thermosensor. Unfolded proteins bind initially to DnaJ; upon interaction with the DnaJ-bound protein, DnaK hydrolyzes its bound ATP, resulting in the formation of a stable complex. GrpE releases ADP from DnaK; ATP binding to DnaK triggers the release of the substrate protein, thus completing the reaction cycle. Several rounds of ATP-dependent interactions between DnaJ, DnaK and GrpE are required for fully efficient folding. The sequence is that of Protein GrpE from Thermus thermophilus (strain ATCC 27634 / DSM 579 / HB8).